The chain runs to 150 residues: C-type lectin 37Db (150 aa).

Positions 1-20 (MMVKLLLLFLVCWSALPLES) are cleaved as a signal peptide. A C-type lectin domain is found at 31–148 (IGEKQYYISL…CYSSVAFICQ (118 aa)). 2 cysteine pairs are disulfide-bonded: cysteine 52–cysteine 147 and cysteine 122–cysteine 139. N-linked (GlcNAc...) asparagine glycans are attached at residues asparagine 107 and asparagine 115.

The protein resides in the secreted. Its function is as follows. Galactose-specific lectin that displays calcium-dependent activity. Binds to the surface of hemocytes and enhances hemocyte encapsulation and melanization. This is likely by interacting with carbohydrates on the surface of the hemocytes. Also displays agglutination activity against the Gram-negative bacterium E.coli. The polypeptide is C-type lectin 37Db (Drosophila melanogaster (Fruit fly)).